The sequence spans 178 residues: ATP synthase subunit delta (178 aa).

Belongs to the ATPase delta chain family. In terms of assembly, F-type ATPases have 2 components, F(1) - the catalytic core - and F(0) - the membrane proton channel. F(1) has five subunits: alpha(3), beta(3), gamma(1), delta(1), epsilon(1). F(0) has three main subunits: a(1), b(2) and c(10-14). The alpha and beta chains form an alternating ring which encloses part of the gamma chain. F(1) is attached to F(0) by a central stalk formed by the gamma and epsilon chains, while a peripheral stalk is formed by the delta and b chains.

It is found in the cell inner membrane. F(1)F(0) ATP synthase produces ATP from ADP in the presence of a proton or sodium gradient. F-type ATPases consist of two structural domains, F(1) containing the extramembraneous catalytic core and F(0) containing the membrane proton channel, linked together by a central stalk and a peripheral stalk. During catalysis, ATP synthesis in the catalytic domain of F(1) is coupled via a rotary mechanism of the central stalk subunits to proton translocation. In terms of biological role, this protein is part of the stalk that links CF(0) to CF(1). It either transmits conformational changes from CF(0) to CF(1) or is implicated in proton conduction. The protein is ATP synthase subunit delta of Pseudomonas entomophila (strain L48).